The sequence spans 124 residues: Small ribosomal subunit protein uS12c (124 aa).

Disordered stretches follow at residues 1–28 (MPTI…QSCP) and 104–124 (AAGV…KPKS). 2 stretches are compositionally biased toward basic residues: residues 11-20 (ERRKIHKKTK) and 109-124 (DRRK…KPKS).

This sequence belongs to the universal ribosomal protein uS12 family. Part of the 30S ribosomal subunit.

The protein localises to the plastid. Its subcellular location is the chloroplast. Its function is as follows. With S4 and S5 plays an important role in translational accuracy. Located at the interface of the 30S and 50S subunits. The sequence is that of Small ribosomal subunit protein uS12c (rps12) from Pyropia yezoensis (Susabi-nori).